The primary structure comprises 101 residues: Urease subunit beta (101 aa).

The protein belongs to the urease beta subunit family. As to quaternary structure, heterotrimer of UreA (gamma), UreB (beta) and UreC (alpha) subunits. Three heterotrimers associate to form the active enzyme.

It localises to the cytoplasm. The catalysed reaction is urea + 2 H2O + H(+) = hydrogencarbonate + 2 NH4(+). It functions in the pathway nitrogen metabolism; urea degradation; CO(2) and NH(3) from urea (urease route): step 1/1. The chain is Urease subunit beta from Burkholderia cenocepacia (strain ATCC BAA-245 / DSM 16553 / LMG 16656 / NCTC 13227 / J2315 / CF5610) (Burkholderia cepacia (strain J2315)).